Reading from the N-terminus, the 556-residue chain is Formate--tetrahydrofolate ligase (556 aa).

Residue 65–72 coordinates ATP; that stretch reads TPAGEGKT.

It belongs to the formate--tetrahydrofolate ligase family.

The enzyme catalyses (6S)-5,6,7,8-tetrahydrofolate + formate + ATP = (6R)-10-formyltetrahydrofolate + ADP + phosphate. The protein operates within one-carbon metabolism; tetrahydrofolate interconversion. The sequence is that of Formate--tetrahydrofolate ligase from Alkaliphilus oremlandii (strain OhILAs) (Clostridium oremlandii (strain OhILAs)).